A 347-amino-acid polypeptide reads, in one-letter code: uncharacterized protein (347 aa).

This is an uncharacterized protein from Sinorhizobium fredii (strain NBRC 101917 / NGR234).